The primary structure comprises 343 residues: tRNA-specific 2-thiouridylase MnmA 2 (343 aa).

Residues 7 to 14 (GMSGGVDS) and leucine 33 contribute to the ATP site. Cysteine 91 acts as the Nucleophile in catalysis. A disulfide bond links cysteine 91 and cysteine 189. Glycine 115 lines the ATP pocket. The tract at residues 139–141 (KDQ) is interaction with tRNA. Cysteine 189 serves as the catalytic Cysteine persulfide intermediate.

It belongs to the MnmA/TRMU family.

The protein resides in the cytoplasm. The enzyme catalyses S-sulfanyl-L-cysteinyl-[protein] + uridine(34) in tRNA + AH2 + ATP = 2-thiouridine(34) in tRNA + L-cysteinyl-[protein] + A + AMP + diphosphate + H(+). Its function is as follows. Catalyzes the 2-thiolation of uridine at the wobble position (U34) of tRNA, leading to the formation of s(2)U34. The polypeptide is tRNA-specific 2-thiouridylase MnmA 2 (Fusobacterium nucleatum subsp. nucleatum (strain ATCC 25586 / DSM 15643 / BCRC 10681 / CIP 101130 / JCM 8532 / KCTC 2640 / LMG 13131 / VPI 4355)).